Here is a 354-residue protein sequence, read N- to C-terminus: UPF0421 protein BH2644 (354 aa).

The next 4 helical transmembrane spans lie at 22-42, 60-80, 107-127, and 133-153; these read AVCL…FAVI, LIRL…AYFF, TLVA…HLFA, and VAGT…ILPP.

Belongs to the UPF0421 family.

It is found in the cell membrane. The sequence is that of UPF0421 protein BH2644 from Halalkalibacterium halodurans (strain ATCC BAA-125 / DSM 18197 / FERM 7344 / JCM 9153 / C-125) (Bacillus halodurans).